A 369-amino-acid chain; its full sequence is Somatostatin receptor type 2 (369 aa).

At 1–43 the chain is on the extracellular side; that stretch reads MEMSSEQLNGSQVWVSSPFDLNGSLGPSNGSNQTEPYYDMTSN. N-linked (GlcNAc...) asparagine glycans are attached at residues asparagine 9, asparagine 22, asparagine 29, and asparagine 32. The chain crosses the membrane as a helical span at residues 44 to 67; the sequence is AVLTFIYFVVCVVGLCGNTLVIYV. Over 68-78 the chain is Cytoplasmic; it reads ILRYAKMKTIT. A helical membrane pass occupies residues 79 to 103; it reads NIYILNLAIADELFMLGLPFLAMQV. The Extracellular segment spans residues 104–118; it reads ALVHWPFGKAICRVV. Cysteine 115 and cysteine 193 are oxidised to a cystine. A helical transmembrane segment spans residues 119-138; that stretch reads MTVDGINQFTSIFCLTVMSI. Over 139-161 the chain is Cytoplasmic; the sequence is DRYLAVVHPIKSAKWRRPRTAKM. The chain crosses the membrane as a helical span at residues 162–181; the sequence is INVAVWCVSLLVILPIMIYA. Residues 182–207 are Extracellular-facing; that stretch reads GLRSNQWGRSSCTINWPGESGAWYTG. A helical membrane pass occupies residues 208–229; that stretch reads FIIYAFILGFLVPLTIICLCYL. Residues 230-253 lie on the Cytoplasmic side of the membrane; that stretch reads FIIIKVKSSGIRVGSSKRKKSEKK. The helical transmembrane segment at 254–278 threads the bilayer; it reads VTRMVSIVVAVFIFCWLPFYIFNVS. The Extracellular segment spans residues 279–288; the sequence is SVSVAISPTP. The helical transmembrane segment at 289–303 threads the bilayer; the sequence is ALKGMFDFVVILTYA. The Cytoplasmic segment spans residues 304–369; that stretch reads NSCANPILYA…LLNGDLQTSI (66 aa). Cysteine 328 carries the S-palmitoyl cysteine lipid modification. 3 positions are modified to phosphoserine: serine 341, serine 343, and serine 348. A phosphothreonine mark is found at threonine 353 and threonine 354.

The protein belongs to the G-protein coupled receptor 1 family. Homodimer and heterodimer with SSTR3 and SSTR5. Heterodimerization with SSTR3 inactivates SSTR3 receptor function. Heterodimerization with SSTR5 is enhanced by agonist stimulation of SSTR2 and increases SSTR2 cell growth inhibition activity. Following agonist stimulation, homodimers dissociate into monomers which is required for receptor internalization. Interacts with beta-arrestin; this interaction is necessary for receptor internalization and is destabilized by heterodimerization with SSTR5 which results in increased recycling of SSTR2 to the cell surface. Interacts (via C-terminus) with SHANK1 (via PDZ domain). Phosphorylated on serine and threonine residues in response to agonist stimulation, leading to receptor desensitization and rapid internalization. Phosphorylated to a greater extent on serine than threonine residues. Threonine phosphorylation is required for arrestin binding and receptor endocytosis but is not necessary for desensitization. Cerebrum and kidney.

It is found in the cell membrane. It localises to the cytoplasm. Receptor for somatostatin-14 and -28. This receptor is coupled via pertussis toxin sensitive G proteins to inhibition of adenylyl cyclase. In addition it stimulates phosphotyrosine phosphatase and PLC via pertussis toxin insensitive as well as sensitive G proteins. Inhibits calcium entry by suppressing voltage-dependent calcium channels. Acts as the functionally dominant somatostatin receptor in pancreatic alpha- and beta-cells where it mediates the inhibitory effect of somatostatin-14 on hormone secretion. Inhibits cell growth through enhancement of MAPK1 and MAPK2 phosphorylation and subsequent up-regulation of CDKN1B. Stimulates neuronal migration and axon outgrowth and may participate in neuron development and maturation during brain development. Mediates negative regulation of insulin receptor signaling through PTPN6. Inactivates SSTR3 receptor function following heterodimerization. The sequence is that of Somatostatin receptor type 2 (Sstr2) from Mus musculus (Mouse).